The following is a 229-amino-acid chain: Vacuolar protein-sorting-associated protein 60 (229 aa).

Residues 9–155 (NKKSHDQLLQ…QGDELQEVLA (147 aa)) are a coiled coil. Position 12 is a phosphoserine (Ser12). The segment at 128-159 (INIDKLQDMQDEMLDLIEQGDELQEVLAMNNN) is interaction with VTA1. Residues 186–229 (PTSENSLGNDMPSYLLGANAPPAFIDEEPNLDTEDKNKALESAQ) form a disordered region. A compositionally biased stretch (basic and acidic residues) spans 218-229 (TEDKNKALESAQ).

This sequence belongs to the SNF7 family. Interacts with VTA1; the interaction occurs at he endosomal membrane.

The protein resides in the endosome membrane. Its subcellular location is the vacuole membrane. Its function is as follows. Has a role in a late stage of multivesicular body (MVB) formation. Can stimulate VPS4 ATPase activity via VTA1. The polypeptide is Vacuolar protein-sorting-associated protein 60 (VPS60) (Saccharomyces cerevisiae (strain ATCC 204508 / S288c) (Baker's yeast)).